A 188-amino-acid chain; its full sequence is FMN-dependent NADPH-azoreductase (188 aa).

Belongs to the azoreductase type 2 family. As to quaternary structure, homotetramer. FMN serves as cofactor.

Functionally, catalyzes the reductive cleavage of azo bond in aromatic azo compounds to the corresponding amines. Requires NADPH, but not NADH, as an electron donor for its activity. The polypeptide is FMN-dependent NADPH-azoreductase (azo1) (Staphylococcus aureus (strain MSSA476)).